Here is a 205-residue protein sequence, read N- to C-terminus: Probable nicotinate-nucleotide adenylyltransferase (205 aa).

It belongs to the NadD family.

The catalysed reaction is nicotinate beta-D-ribonucleotide + ATP + H(+) = deamido-NAD(+) + diphosphate. It functions in the pathway cofactor biosynthesis; NAD(+) biosynthesis; deamido-NAD(+) from nicotinate D-ribonucleotide: step 1/1. Catalyzes the reversible adenylation of nicotinate mononucleotide (NaMN) to nicotinic acid adenine dinucleotide (NaAD). This Nocardioides sp. (strain ATCC BAA-499 / JS614) protein is Probable nicotinate-nucleotide adenylyltransferase.